The following is a 188-amino-acid chain: UPF0301 protein Cag_1601 (188 aa).

This sequence belongs to the UPF0301 (AlgH) family.

The sequence is that of UPF0301 protein Cag_1601 from Chlorobium chlorochromatii (strain CaD3).